The sequence spans 295 residues: Oxidoreductase AN1597 (295 aa).

Belongs to the asaB hydroxylase/desaturase family.

Its pathway is secondary metabolite biosynthesis; terpenoid biosynthesis. Its function is as follows. Oxidoreductase; part of the gene cluster that mediates the biosynthesis of the diterpene ent-pimara-8(14),15-diene (PD). Within the cluster, the HMG-CoA reductase AN1593 functions in the mevalonate pathway, which produces isoprenoid precursors. The geranylgeranyl pyrophosphate (GGPP) synthase AN1592 is needed in the formation of GGPP, the precursor for diterpenes. Lastly, the pimaradiene synthase pbcA performs the 2 cyclization steps that convert GGPP to ent-pimara-8(14),15-diene. The putative roles of the remaining cluster enzymes in ent-pimara-8(14),15-diene biosynthesis is unclear. The cytochrome P450 monooxygenase AN1598, the glutathione S-transferase AN1595, the oxidoreductases AN1596 and AN1597 probably function as decorative enzymes. It is possible that in biological conditions the compound is oxidized to ent-pimara-8(14),15-dien-19-oic acid, which is a bioactive diterpene compound predominant in many plant extracts. This Emericella nidulans (strain FGSC A4 / ATCC 38163 / CBS 112.46 / NRRL 194 / M139) (Aspergillus nidulans) protein is Oxidoreductase AN1597.